Reading from the N-terminus, the 664-residue chain is MIEQARIEELRQKLNQYSYEYYVQDQPTVPDSTYDQLLRELTELETAHPELITPDSPTQRVGAAALDAFEKVTHDLPMLSLGNVFDETEIREWVARIERSLGRSTTYVAELKFDGLAISLKYEDGQLVRGATRGDGTVGENITQNLRTIKALPLRLRRNETVEVRGEAYMPKQSFERLNADRAAREEALFANPRNAAAGSLRQLDSSITASRNLSLFVYGVGVNTLSARSHSEAMLQLAELGLPTNKEMQTCETVEEILAYIAHWTMERSNLPYEIDGIVLKVDRYDDQEELGFTAKSPRFATAYKFAAEEVMTTVEEVDFSVGRTGKVTPRARFAPVVVAGSTVSYATLHNADFITEKDIRLHDQVIIKKAGDVIPAVVSVVVSERTGNEQPIEFPAHCPACESELVRLEGEADIRCVSPECPAQLVEGIIHFVSRQAMNIDGLGEKVVRQLYEHEAIRTLADLYRLDRDELLTYERMGETSVDNLLTAIEASKQNSLERLMFGLGIRLVGQKAAYLLAERFDSLDGIAQAEYEDILAIDGIGSKIADSVTKYFEHPEAQALIKDLAELGLNQQFLGQRVDQSNAPLAGKTIVLTGTLESLKRSEAGKRLELLGADVTGSVSKKTDILVAGEKAGSKLTKAESLGIEIWNETQLLEELAKYEG.

NAD(+)-binding positions include 31–35, 80–81, and E110; these read DSTYD and SL. K112 acts as the N6-AMP-lysine intermediate in catalysis. Residues R133, E167, K282, and K306 each contribute to the NAD(+) site. Zn(2+) is bound by residues C400, C403, C418, and C423. In terms of domain architecture, BRCT spans 583 to 664; sequence QSNAPLAGKT…LLEELAKYEG (82 aa).

Belongs to the NAD-dependent DNA ligase family. LigA subfamily. Requires Mg(2+) as cofactor. The cofactor is Mn(2+).

It catalyses the reaction NAD(+) + (deoxyribonucleotide)n-3'-hydroxyl + 5'-phospho-(deoxyribonucleotide)m = (deoxyribonucleotide)n+m + AMP + beta-nicotinamide D-nucleotide.. In terms of biological role, DNA ligase that catalyzes the formation of phosphodiester linkages between 5'-phosphoryl and 3'-hydroxyl groups in double-stranded DNA using NAD as a coenzyme and as the energy source for the reaction. It is essential for DNA replication and repair of damaged DNA. The protein is DNA ligase of Exiguobacterium sibiricum (strain DSM 17290 / CCUG 55495 / CIP 109462 / JCM 13490 / 255-15).